The following is a 132-amino-acid chain: Small ribosomal subunit protein uS8 (132 aa).

This sequence belongs to the universal ribosomal protein uS8 family. In terms of assembly, part of the 30S ribosomal subunit. Contacts proteins S5 and S12.

In terms of biological role, one of the primary rRNA binding proteins, it binds directly to 16S rRNA central domain where it helps coordinate assembly of the platform of the 30S subunit. The polypeptide is Small ribosomal subunit protein uS8 (Anaeromyxobacter dehalogenans (strain 2CP-C)).